A 256-amino-acid polypeptide reads, in one-letter code: Trans-aconitate 2-methyltransferase (256 aa).

It belongs to the methyltransferase superfamily. Tam family.

The protein localises to the cytoplasm. The catalysed reaction is trans-aconitate + S-adenosyl-L-methionine = (E)-3-(methoxycarbonyl)pent-2-enedioate + S-adenosyl-L-homocysteine. Its function is as follows. Catalyzes the S-adenosylmethionine monomethyl esterification of trans-aconitate. The chain is Trans-aconitate 2-methyltransferase from Rhizobium leguminosarum bv. trifolii (strain WSM2304).